A 1773-amino-acid polypeptide reads, in one-letter code: Disco-interacting protein 2 (1773 aa).

The region spanning 3–110 is the DMAP1-binding domain; sequence HTASLPGYVR…QRHSKKIDFH (108 aa). Residues tyrosine 60 and tyrosine 61 each carry the phosphotyrosine modification. 2 disordered regions span residues 112–185 and 198–319; these read QAAM…YHSE and LKGR…PLSS. 2 stretches are compositionally biased toward polar residues: residues 113-125 and 146-165; these read AAMS…QSGN and YQNT…NNSQ. Residues 166 to 175 show a composition bias toward basic residues; the sequence is HRQRRTQRKV. Over residues 176–185 the composition is skewed to basic and acidic residues; it reads THNEKRYHSE. A compositionally biased stretch (acidic residues) spans 224-236; that stretch reads DELDSSTDDESIP. Basic and acidic residues predominate over residues 241 to 253; that stretch reads SPDKEYNYPRDHI. The segment covering 272–297 has biased composition (polar residues); that stretch reads SMGSQQHARTDVKQNQITNQKYTAPN.

This sequence belongs to the DIP2 family. As to quaternary structure, interacts with Disco. In terms of tissue distribution, expressed in the developing nervous system. Ubiquitously expressed in the developing brain. Within the mushroom body, a higher level is detected in the core of lobes and peduncle in the late third instar larva. Detected in whole mushroom body neuron structures at 48 hours after puparium formation and during later stages.

It localises to the cell membrane. Functionally, required for precise axonal bifurcation in mushroom body neurons by suppressing ectopic bifurcation and regulating the guidance of sister axons. May function by regulating expression of tdp1. Acts downstream of the serine/threonine-protein kinase Bsk to modulate the direction of axon projection. May play a role in fatty acid metabolism. The polypeptide is Disco-interacting protein 2 (Drosophila melanogaster (Fruit fly)).